A 144-amino-acid polypeptide reads, in one-letter code: Crossover junction endodeoxyribonuclease Hjc (144 aa).

A Mg(2+)-binding site is contributed by glutamate 12. Residue serine 32 is part of the active site. Mg(2+) is bound by residues aspartate 42 and glutamate 55.

It belongs to the Holliday junction resolvase Hjc family. As to quaternary structure, homodimer; forms a 2:1 complex with Hel308 (Hjm). May form a complex with Holliday junction DNA, Hjc and Hjm. Mg(2+) serves as cofactor.

It carries out the reaction Endonucleolytic cleavage at a junction such as a reciprocal single-stranded crossover between two homologous DNA duplexes (Holliday junction).. Cleavage stimulated by PCNA123 and PCNA323 and by RadC2. Its function is as follows. A structure-specific endonuclease that resolves Holliday junction (HJ) intermediates during genetic recombination. Cleaves 4-way DNA junctions introducing paired nicks in opposing strands, leaving a 5'-terminal phosphate and a 3'-terminal hydroxyl group that are subsequently ligated to produce recombinant products. Inhibits the helicase activity of Hel308 (Hjm). The sequence is that of Crossover junction endodeoxyribonuclease Hjc from Sulfurisphaera tokodaii (strain DSM 16993 / JCM 10545 / NBRC 100140 / 7) (Sulfolobus tokodaii).